Reading from the N-terminus, the 270-residue chain is Phosphatidylglycerol--prolipoprotein diacylglyceryl transferase (270 aa).

4 helical membrane passes run 18-38 (IAVH…LWLA), 55-75 (LVLF…VIFQ), 89-109 (IWNG…TGII), and 115-135 (GLSF…GQAI). Arginine 137 contributes to the a 1,2-diacyl-sn-glycero-3-phospho-(1'-sn-glycerol) binding site. A run of 3 helical transmembrane segments spans residues 177-197 (QPTF…LLLL), 205-225 (GELF…IEGL), and 236-256 (LRIA…LIAY).

Belongs to the Lgt family.

Its subcellular location is the cell membrane. It carries out the reaction L-cysteinyl-[prolipoprotein] + a 1,2-diacyl-sn-glycero-3-phospho-(1'-sn-glycerol) = an S-1,2-diacyl-sn-glyceryl-L-cysteinyl-[prolipoprotein] + sn-glycerol 1-phosphate + H(+). It participates in protein modification; lipoprotein biosynthesis (diacylglyceryl transfer). Catalyzes the transfer of the diacylglyceryl group from phosphatidylglycerol to the sulfhydryl group of the N-terminal cysteine of a prolipoprotein, the first step in the formation of mature lipoproteins. The protein is Phosphatidylglycerol--prolipoprotein diacylglyceryl transferase of Bacillus licheniformis (strain ATCC 14580 / DSM 13 / JCM 2505 / CCUG 7422 / NBRC 12200 / NCIMB 9375 / NCTC 10341 / NRRL NRS-1264 / Gibson 46).